A 418-amino-acid chain; its full sequence is Alpha-1-antitrypsin (418 aa).

Positions 1-24 (MPSSVSWGILLLAGLCCLVPVSLA) are cleaved as a signal peptide. Ser38 is subject to Phosphoserine. 3 N-linked (GlcNAc...) asparagine glycosylation sites follow: Asn70, Asn107, and Asn271. The segment at 373–392 (GAMFLEAIPMSIPPEVKFNK) is RCL. Residue Ser383 is modified to Phosphoserine.

It belongs to the serpin family. Interacts with CELA2A. Interacts with ERGIC3 and LMAN1/ERGIC53. Interacts with PRSS1/Trypsin. As to expression, plasma.

It is found in the secreted. Its function is as follows. Inhibitor of serine proteases. Its primary target is elastase, but it also has a moderate affinity for plasmin and thrombin. Inhibits trypsin, chymotrypsin and plasminogen activator. In Pongo abelii (Sumatran orangutan), this protein is Alpha-1-antitrypsin (SERPINA1).